A 333-amino-acid chain; its full sequence is MRIAVMGAGAWGTALALSLCASTASSHQVTLWTRSRQHLADLVSQRINRRYFSAFPLPASLRLTAGLEEAVEDAELALIVVPVSGLRETLREIAASGKKIPVIWGCKGFESQSAKLPHQVAEEEYAGAAPYGVLSGPSFALEIAQGLPAALTLASRDGEFAREVAAQLHAPRLRVYSCTDVVGVETGGAVKNVISIAAGICDGMGFGSNARAALITRGLAEITRLGLKLGGRMETFLGLTGVGDLILTCTGDLSRNRRVGLALAAGRSLPDILQELGHIAEGVHTAREVLRLSHLLGIEMPITKGVCSILDDGVPAGQAVEALLNREPKSEIY.

Residues tryptophan 11, arginine 34, and lysine 107 each contribute to the NADPH site. 3 residues coordinate sn-glycerol 3-phosphate: lysine 107, glycine 136, and serine 138. Residue alanine 140 coordinates NADPH. Residues lysine 191, aspartate 244, serine 254, arginine 255, and asparagine 256 each coordinate sn-glycerol 3-phosphate. The Proton acceptor role is filled by lysine 191. Residue arginine 255 coordinates NADPH. NADPH-binding residues include isoleucine 279 and glutamate 281.

It belongs to the NAD-dependent glycerol-3-phosphate dehydrogenase family.

It is found in the cytoplasm. The catalysed reaction is sn-glycerol 3-phosphate + NAD(+) = dihydroxyacetone phosphate + NADH + H(+). The enzyme catalyses sn-glycerol 3-phosphate + NADP(+) = dihydroxyacetone phosphate + NADPH + H(+). It functions in the pathway membrane lipid metabolism; glycerophospholipid metabolism. Functionally, catalyzes the reduction of the glycolytic intermediate dihydroxyacetone phosphate (DHAP) to sn-glycerol 3-phosphate (G3P), the key precursor for phospholipid synthesis. The polypeptide is Glycerol-3-phosphate dehydrogenase [NAD(P)+] (Nitrosospira multiformis (strain ATCC 25196 / NCIMB 11849 / C 71)).